Reading from the N-terminus, the 423-residue chain is Acaloleptin A (423 aa).

The N-terminal stretch at 1–17 is a signal peptide; the sequence is MITKISLILFAVLLVSG. A propeptide spanning residues 18–26 is cleaved from the precursor; it reads LEEEERWKR. Disordered regions lie at residues 28–58, 108–128, 180–203, and 355–385; these read LQPGAPNVNNNDQPWQVSPHISRDDSGNTKT, INNKDQPWQVSPHISRDDNGN, NVNNKDQPWQVSPHISRDDSGNTR, and SDDEDEEEEEDQPWQLNPNIARGDDGNTRAD. Residues 34–43 show a composition bias toward polar residues; the sequence is NVNNNDQPWQ. The span at 180–189 shows a compositional bias: polar residues; the sequence is NVNNKDQPWQ. Acidic residues predominate over residues 357–366; sequence DEDEEEEEDQ. Residues 376 to 385 show a composition bias toward basic and acidic residues; sequence RGDDGNTRAD.

Belongs to the coleoptericin family. As to expression, hemolymph (at protein level). Larval fat body.

It localises to the secreted. In terms of biological role, acaloleptins A1-A4 show antibacterial activity against Gram-negative bacteria but not against Gram-positive bacteria. Acaloleptin A5 shows antibacterial activity against Gram-positive bacteria but not against Gram-negative bacteria, and may also have antifungal activity. This chain is Acaloleptin A, found in Acalolepta luxuriosa (Udo longhorn beetle).